Here is a 102-residue protein sequence, read N- to C-terminus: Feather keratin (102 aa).

N-acetylserine is present on Ser1.

Belongs to the avian keratin family. In terms of assembly, the avian keratins (F-ker, S-ker, C-ker and B-ker) are a complex mixture of very similar polypeptides.

The chain is Feather keratin from Dromaius novaehollandiae (Emu).